A 306-amino-acid chain; its full sequence is tRNA pseudouridine synthase B (306 aa).

Asp48 serves as the catalytic Nucleophile.

It belongs to the pseudouridine synthase TruB family. Type 1 subfamily.

The catalysed reaction is uridine(55) in tRNA = pseudouridine(55) in tRNA. Functionally, responsible for synthesis of pseudouridine from uracil-55 in the psi GC loop of transfer RNAs. The protein is tRNA pseudouridine synthase B of Ectopseudomonas mendocina (strain ymp) (Pseudomonas mendocina).